The sequence spans 261 residues: tRNA pseudouridine synthase A (261 aa).

Catalysis depends on D52, which acts as the Nucleophile. Residue Y110 coordinates substrate.

This sequence belongs to the tRNA pseudouridine synthase TruA family. As to quaternary structure, homodimer.

It carries out the reaction uridine(38/39/40) in tRNA = pseudouridine(38/39/40) in tRNA. Its function is as follows. Formation of pseudouridine at positions 38, 39 and 40 in the anticodon stem and loop of transfer RNAs. This chain is tRNA pseudouridine synthase A, found in Blochmanniella pennsylvanica (strain BPEN).